Reading from the N-terminus, the 423-residue chain is Mannose-6-phosphate isomerase (423 aa).

A2 bears the N-acetylalanine mark. A phosphoserine mark is found at S102 and S108. Zn(2+) contacts are provided by Q110, H112, E137, and H276. R295 is a catalytic residue.

The protein belongs to the mannose-6-phosphate isomerase type 1 family. Requires Zn(2+) as cofactor. Expressed in all tissues, but more abundant in testis.

The protein localises to the cytoplasm. It catalyses the reaction D-mannose 6-phosphate = D-fructose 6-phosphate. The protein operates within nucleotide-sugar biosynthesis; GDP-alpha-D-mannose biosynthesis; alpha-D-mannose 1-phosphate from D-fructose 6-phosphate: step 1/2. Isomerase that catalyzes the interconversion of fructose-6-P and mannose-6-P and has a critical role in the supply of D-mannose derivatives required for many eukaryotic glycosylation reactions. The polypeptide is Mannose-6-phosphate isomerase (Mus musculus (Mouse)).